The chain runs to 404 residues: Neutral protease 2 homolog AFLA_065450 (404 aa).

The N-terminal stretch at 1–19 (MRFISASSLLLALAPTLNA) is a signal peptide. Positions 20-185 (VPVEVAGSAQ…TQAVKILERR (166 aa)) are excised as a propeptide. 2 disulfide bridges follow: C191/C263 and C270/C288. H313 is a binding site for Zn(2+). E314 is a catalytic residue. Zn(2+)-binding residues include H317 and D328.

This sequence belongs to the peptidase M35 family. Requires Zn(2+) as cofactor.

Its subcellular location is the secreted. It catalyses the reaction Preferential cleavage of bonds with hydrophobic residues in P1'. Also 3-Asn-|-Gln-4 and 8-Gly-|-Ser-9 bonds in insulin B chain.. In terms of biological role, secreted metalloproteinase that allows assimilation of proteinaceous substrates. Shows high activities on basic nuclear substrates such as histone and protamine. The polypeptide is Neutral protease 2 homolog AFLA_065450 (Aspergillus flavus (strain ATCC 200026 / FGSC A1120 / IAM 13836 / NRRL 3357 / JCM 12722 / SRRC 167)).